We begin with the raw amino-acid sequence, 312 residues long: Ornithine carbamoyltransferase (312 aa).

Carbamoyl phosphate-binding positions include 50-53, Gln-77, Arg-101, and 128-131; these read STRT and HPCQ. Residues Asn-160, Asp-224, and 228 to 229 contribute to the L-ornithine site; that span reads SM. Carbamoyl phosphate is bound by residues 264–265 and Arg-292; that span reads CL.

This sequence belongs to the aspartate/ornithine carbamoyltransferase superfamily. OTCase family.

Its subcellular location is the cytoplasm. The enzyme catalyses carbamoyl phosphate + L-ornithine = L-citrulline + phosphate + H(+). Its pathway is amino-acid biosynthesis; L-arginine biosynthesis; L-arginine from L-ornithine and carbamoyl phosphate: step 1/3. Functionally, reversibly catalyzes the transfer of the carbamoyl group from carbamoyl phosphate (CP) to the N(epsilon) atom of ornithine (ORN) to produce L-citrulline. In Leifsonia xyli subsp. xyli (strain CTCB07), this protein is Ornithine carbamoyltransferase.